Reading from the N-terminus, the 187-residue chain is Orotate phosphoribosyltransferase (187 aa).

Residues arginine 98, lysine 99, lysine 102, histidine 104, and 128–136 (EDVTTTGGS) each bind 5-phospho-alpha-D-ribose 1-diphosphate. 2 residues coordinate orotate: threonine 132 and arginine 160.

It belongs to the purine/pyrimidine phosphoribosyltransferase family. PyrE subfamily. In terms of assembly, homodimer. Mg(2+) serves as cofactor.

It carries out the reaction orotidine 5'-phosphate + diphosphate = orotate + 5-phospho-alpha-D-ribose 1-diphosphate. The protein operates within pyrimidine metabolism; UMP biosynthesis via de novo pathway; UMP from orotate: step 1/2. Functionally, catalyzes the transfer of a ribosyl phosphate group from 5-phosphoribose 1-diphosphate to orotate, leading to the formation of orotidine monophosphate (OMP). This is Orotate phosphoribosyltransferase from Bradyrhizobium diazoefficiens (strain JCM 10833 / BCRC 13528 / IAM 13628 / NBRC 14792 / USDA 110).